Reading from the N-terminus, the 202-residue chain is FMN-dependent NADH:quinone oxidoreductase (202 aa).

FMN-binding positions include S9, S15–S17, and M94–L97.

This sequence belongs to the azoreductase type 1 family. Homodimer. FMN serves as cofactor.

It carries out the reaction 2 a quinone + NADH + H(+) = 2 a 1,4-benzosemiquinone + NAD(+). It catalyses the reaction N,N-dimethyl-1,4-phenylenediamine + anthranilate + 2 NAD(+) = 2-(4-dimethylaminophenyl)diazenylbenzoate + 2 NADH + 2 H(+). In terms of biological role, quinone reductase that provides resistance to thiol-specific stress caused by electrophilic quinones. Its function is as follows. Also exhibits azoreductase activity. Catalyzes the reductive cleavage of the azo bond in aromatic azo compounds to the corresponding amines. This is FMN-dependent NADH:quinone oxidoreductase from Gluconobacter oxydans (strain 621H) (Gluconobacter suboxydans).